Reading from the N-terminus, the 106-residue chain is Putative membrane protein insertion efficiency factor (106 aa).

It belongs to the UPF0161 family.

It localises to the cell inner membrane. Functionally, could be involved in insertion of integral membrane proteins into the membrane. The protein is Putative membrane protein insertion efficiency factor of Acinetobacter baylyi (strain ATCC 33305 / BD413 / ADP1).